Reading from the N-terminus, the 955-residue chain is Eukaryotic translation initiation factor 3 subunit A (955 aa).

Residues 96-127 adopt a coiled-coil conformation; that stretch reads LSLAEQRVTDAQAQADKIADEEEADDLEAEET. A PCI domain is found at 325 to 498; it reads YQRVASFVLL…RSVLFEEVRA (174 aa). Coiled coils occupy residues 533-636 and 752-860; these read AEAR…INAK and KREA…KRAG. The span at 789 to 858 shows a compositional bias: basic and acidic residues; the sequence is RAEEEAKAAA…ELEAKLEAKR (70 aa). Positions 789-955 are disordered; it reads RAEEEAKAAA…GRYIPPSQRN (167 aa).

This sequence belongs to the eIF-3 subunit A family. In terms of assembly, component of the eukaryotic translation initiation factor 3 (eIF-3) complex.

The protein localises to the cytoplasm. Functionally, RNA-binding component of the eukaryotic translation initiation factor 3 (eIF-3) complex, which is involved in protein synthesis of a specialized repertoire of mRNAs and, together with other initiation factors, stimulates binding of mRNA and methionyl-tRNAi to the 40S ribosome. The eIF-3 complex specifically targets and initiates translation of a subset of mRNAs involved in cell proliferation. The polypeptide is Eukaryotic translation initiation factor 3 subunit A (Yarrowia lipolytica (strain CLIB 122 / E 150) (Yeast)).